Here is a 706-residue protein sequence, read N- to C-terminus: Polyribonucleotide nucleotidyltransferase (706 aa).

Mg(2+) is bound by residues D485 and D491. In terms of domain architecture, KH spans 552–611 (PRMLKMKIHPDKIREVIGSGGKTINKIIEDTGVKIDIENDGTIFIAAQTQEAGELALSII). Positions 621–689 (GDIFKGKVIK…QQGKVSLSRK (69 aa)) constitute an S1 motif domain.

This sequence belongs to the polyribonucleotide nucleotidyltransferase family. It depends on Mg(2+) as a cofactor.

It is found in the cytoplasm. It catalyses the reaction RNA(n+1) + phosphate = RNA(n) + a ribonucleoside 5'-diphosphate. In terms of biological role, involved in mRNA degradation. Catalyzes the phosphorolysis of single-stranded polyribonucleotides processively in the 3'- to 5'-direction. The protein is Polyribonucleotide nucleotidyltransferase of Alkaliphilus oremlandii (strain OhILAs) (Clostridium oremlandii (strain OhILAs)).